The chain runs to 128 residues: Protein yippee-like At3g08990 (128 aa).

In terms of domain architecture, Yippee spans 12-109; it reads LVYSCKYCQT…LERFKVLGPY (98 aa). Zn(2+)-binding residues include C16, C19, C72, and C75.

It belongs to the yippee family.

This chain is Protein yippee-like At3g08990, found in Arabidopsis thaliana (Mouse-ear cress).